We begin with the raw amino-acid sequence, 260 residues long: MVLIRVLANLLILQLSYAQKASELVIGGDECNINEHRSLVVLFNSSGFLCAGTLINQEWVLTAANCDRKNIRIKLGMHSKNVTNEDEQTRVPKRSTFVSVAKTSHQTLGTRTSMLIRLKRPVNDSPHIAPLSLPSSPPSVGSVCRVMGWGTISPTKVSYPDVPHCANINLLDYEVCREAHGGLPATSRTLCAGILEGGKDSCQGDSGGPLICNGQFQGILSWGVHPCGQPHKPGVYTKVSDYSEWIQSIIAGNTDVTCPP.

The first 18 residues, 1 to 18 (MVLIRVLANLLILQLSYA), serve as a signal peptide directing secretion. Positions 19–24 (QKASEL) are excised as a propeptide. Residues 25–251 (VIGGDECNIN…YSEWIQSIIA (227 aa)) form the Peptidase S1 domain. Disulfide bonds link Cys31–Cys165, Cys50–Cys66, Cys144–Cys212, Cys176–Cys191, and Cys202–Cys227. A glycan (N-linked (GlcNAc...) asparagine) is linked at Asn44. An N-linked (GlcNAc...) asparagine glycan is attached at Asn81.

It belongs to the peptidase S1 family. Snake venom subfamily. As to quaternary structure, monomer. As to expression, expressed by the venom gland.

Its subcellular location is the secreted. Its activity is regulated as follows. Inhibited by benzamidine and partially inhibited by EDTA. In terms of biological role, thrombin-like snake venom serine protease that induces blood clotting in vitro, defibrinogenation in vivo (by intraperitoneal injection into mice), albuminolytic and fibrinogenolytic activities. Preferentially cleaves the alpha chain of fibrinogen (FGA). Causes hemolysis in the heart, causes apparent hyperemia and lymphocytic interstitial pneumonitis in the lung, causes necrosis and inflammatory infiltrate in the liver, and causes glomerular congestion in the kidney. Also provokes a drastic myonecrosis. This Bothrops alternatus (Urutu) protein is Thrombin-like enzyme bhalternin.